The following is a 238-amino-acid chain: Fatty acid metabolism regulator protein (238 aa).

Residues 6 to 74 (KGPASFAEKY…HGKPTRVNNF (69 aa)) form the HTH gntR-type domain. Residues 34–53 (ERELSELIGVTRTTLREVLQ) constitute a DNA-binding region (H-T-H motif).

In terms of assembly, homodimer.

Its subcellular location is the cytoplasm. Its function is as follows. Multifunctional regulator of fatty acid metabolism. This Shewanella baltica (strain OS223) protein is Fatty acid metabolism regulator protein.